A 1579-amino-acid chain; its full sequence is tRNA (guanosine(18)-2'-O)-methyltransferase TARBP1 (1579 aa).

Residue M1 is modified to N-acetylmethionine. V1501, G1524, I1544, Q1546, and L1553 together coordinate S-adenosyl-L-homocysteine.

It belongs to the class IV-like SAM-binding methyltransferase superfamily. RNA methyltransferase TrmH family. Monomer and homodimer.

The enzyme catalyses guanosine(18) in tRNA + S-adenosyl-L-methionine = 2'-O-methylguanosine(18) in tRNA + S-adenosyl-L-homocysteine + H(+). In terms of biological role, S-adenosyl-L-methionine-dependent 2'-O-ribose methyltransferase that catalyzes the formation of 2'-O-methylguanosine at position 18 (Gm18) in a subset of tRNA. Selectively mediates Gm18 methylation of tRNAGln-TTG/CTG and tRNASer-TGA/GCT. Gm18 modification can enhance the stability of modified tRNAs. The protein is tRNA (guanosine(18)-2'-O)-methyltransferase TARBP1 of Mus musculus (Mouse).